Consider the following 949-residue polypeptide: Translation initiation factor IF-2 (949 aa).

Disordered regions lie at residues 61 to 122, 139 to 159, and 171 to 284; these read IQAN…PIIK, VENT…QKLQ, and LTQS…NKSH. Composition is skewed to basic and acidic residues over residues 112-122 and 150-159; these read KKKEAPAPIIK and QIEKAKQKLQ. Residues 174–190 are compositionally biased toward low complexity; that stretch reads SNTNTTNNANSASNVSN. Basic and acidic residues predominate over residues 191 to 208; sequence AKKEISEVKKQEQEIKRH. A compositionally biased stretch (basic residues) spans 209-220; that stretch reads ENIKRRTGFRVI. Residues 249–264 are compositionally biased toward basic and acidic residues; that stretch reads EDIKKEWQEKDKQETK. The tr-type G domain occupies 448 to 617; the sequence is ERPPVVTIMG…LIQADIMELK (170 aa). The interval 457-464 is G1; that stretch reads GHVDHGKT. A GTP-binding site is contributed by 457-464; it reads GHVDHGKT. The tract at residues 482–486 is G2; that stretch reads GITQH. The tract at residues 503-506 is G3; that stretch reads DTPG. GTP contacts are provided by residues 503–507 and 557–560; these read DTPGH and NKMD. The interval 557 to 560 is G4; that stretch reads NKMD. A G5 region spans residues 593–595; the sequence is SAK.

This sequence belongs to the TRAFAC class translation factor GTPase superfamily. Classic translation factor GTPase family. IF-2 subfamily.

It localises to the cytoplasm. In terms of biological role, one of the essential components for the initiation of protein synthesis. Protects formylmethionyl-tRNA from spontaneous hydrolysis and promotes its binding to the 30S ribosomal subunits. Also involved in the hydrolysis of GTP during the formation of the 70S ribosomal complex. The polypeptide is Translation initiation factor IF-2 (infB) (Helicobacter pylori (strain J99 / ATCC 700824) (Campylobacter pylori J99)).